A 216-amino-acid chain; its full sequence is Large ribosomal subunit protein uL24m (216 aa).

A mitochondrion-targeting transit peptide spans 1 to 9; that stretch reads MRLTALLSM. In terms of domain architecture, KOW spans 56-89; the sequence is VVRGDTVEVLSGKEKGKQGKVAQVIRARNWVILE. The segment at 167 to 186 is disordered; sequence PQQWKDGPKDTSPEDTLQKT.

The protein belongs to the universal ribosomal protein uL24 family. As to quaternary structure, component of the mitochondrial ribosome large subunit (39S) which comprises a 16S rRNA and about 50 distinct proteins.

The protein resides in the mitochondrion. This is Large ribosomal subunit protein uL24m (mrpl24) from Danio rerio (Zebrafish).